A 590-amino-acid chain; its full sequence is Glutathione S-transferase T3 (590 aa).

Residues 1–82 (MKLKVYADRM…YLSSAYPSVV (82 aa)) form the GST N-terminal domain. Residues 11-12 (SQ), 40-41 (QL), 53-54 (KV), and 66-67 (ES) each bind glutathione. The GST C-terminal domain occupies 89–232 (DLSKRARIHS…KDRCQKQREM (144 aa)). Positions 265-336 (DRRKHRRKWS…HCKQRWSKLN (72 aa)) constitute a Myb-like domain. The segment at 402–427 (SKGGGSSKRTKLNNGDRVYSSSSNPE) is disordered.

It belongs to the GST superfamily. Theta family.

The protein localises to the nucleus. It catalyses the reaction RX + glutathione = an S-substituted glutathione + a halide anion + H(+). In terms of biological role, may be involved in the conjugation of reduced glutathione to a wide number of exogenous and endogenous hydrophobic electrophiles and have a detoxification role against certain herbicides. The polypeptide is Glutathione S-transferase T3 (GSTT3) (Arabidopsis thaliana (Mouse-ear cress)).